Consider the following 552-residue polypeptide: Beta-hexosaminidase A (552 aa).

Residues 1-15 (MRLIVLSLLFTSTLA) form the signal peptide. A glycan (N-linked (GlcNAc...) asparagine) is linked at Asn44. Catalysis depends on Glu322, which acts as the Proton donor. Residues Asn348, Asn409, and Asn457 are each glycosylated (N-linked (GlcNAc...) asparagine).

It belongs to the glycosyl hydrolase 20 family.

It localises to the lysosome. It catalyses the reaction Hydrolysis of terminal non-reducing N-acetyl-D-hexosamine residues in N-acetyl-beta-D-hexosaminides.. In terms of biological role, responsible for the degradation of GM2 gangliosides, and a variety of other molecules containing terminal N-acetyl hexosamines. Degrades chitotriose. The sequence is that of Beta-hexosaminidase A from Caenorhabditis briggsae.